A 306-amino-acid chain; its full sequence is Acetyl-coenzyme A carboxylase carboxyl transferase subunit beta (306 aa).

The region spanning 27-296 is the CoA carboxyltransferase N-terminal domain; it reads LWHKCPSCDA…PRFVAPVIEP (270 aa). Zn(2+) is bound by residues Cys31, Cys34, Cys50, and Cys53. The C4-type zinc finger occupies 31–53; the sequence is CPSCDAVLYRPELEKTLDVCPKC.

It belongs to the AccD/PCCB family. In terms of assembly, acetyl-CoA carboxylase is a heterohexamer composed of biotin carboxyl carrier protein (AccB), biotin carboxylase (AccC) and two subunits each of ACCase subunit alpha (AccA) and ACCase subunit beta (AccD). Requires Zn(2+) as cofactor.

The protein localises to the cytoplasm. The enzyme catalyses N(6)-carboxybiotinyl-L-lysyl-[protein] + acetyl-CoA = N(6)-biotinyl-L-lysyl-[protein] + malonyl-CoA. It functions in the pathway lipid metabolism; malonyl-CoA biosynthesis; malonyl-CoA from acetyl-CoA: step 1/1. Component of the acetyl coenzyme A carboxylase (ACC) complex. Biotin carboxylase (BC) catalyzes the carboxylation of biotin on its carrier protein (BCCP) and then the CO(2) group is transferred by the transcarboxylase to acetyl-CoA to form malonyl-CoA. The chain is Acetyl-coenzyme A carboxylase carboxyl transferase subunit beta from Pseudomonas syringae pv. tomato (strain ATCC BAA-871 / DC3000).